The sequence spans 161 residues: Putative pre-16S rRNA nuclease (161 aa).

Belongs to the YqgF nuclease family.

The protein localises to the cytoplasm. Could be a nuclease involved in processing of the 5'-end of pre-16S rRNA. The chain is Putative pre-16S rRNA nuclease from Prochlorococcus marinus (strain MIT 9313).